We begin with the raw amino-acid sequence, 304 residues long: GTP cyclohydrolase FolE2 (304 aa).

It belongs to the GTP cyclohydrolase IV family.

It catalyses the reaction GTP + H2O = 7,8-dihydroneopterin 3'-triphosphate + formate + H(+). It participates in cofactor biosynthesis; 7,8-dihydroneopterin triphosphate biosynthesis; 7,8-dihydroneopterin triphosphate from GTP: step 1/1. Converts GTP to 7,8-dihydroneopterin triphosphate. This is GTP cyclohydrolase FolE2 (folE2) from Bacillus subtilis (strain 168).